A 362-amino-acid chain; its full sequence is Dihydroorotate dehydrogenase (quinone) (362 aa).

Residues 62-66 (AGYDK) and T86 each bind FMN. K66 contacts substrate. 111–115 (NRLGF) contacts substrate. Residues N139 and N170 each coordinate FMN. Residue N170 coordinates substrate. The Nucleophile role is filled by S173. N175 is a substrate binding site. FMN-binding residues include K215 and S243. Residue 244–245 (NT) coordinates substrate. Residues G266, G295, and 316-317 (YS) each bind FMN.

The protein belongs to the dihydroorotate dehydrogenase family. Type 2 subfamily. Monomer. FMN is required as a cofactor.

The protein localises to the cell membrane. It catalyses the reaction (S)-dihydroorotate + a quinone = orotate + a quinol. It participates in pyrimidine metabolism; UMP biosynthesis via de novo pathway; orotate from (S)-dihydroorotate (quinone route): step 1/1. Functionally, catalyzes the conversion of dihydroorotate to orotate with quinone as electron acceptor. This Rhizobium johnstonii (strain DSM 114642 / LMG 32736 / 3841) (Rhizobium leguminosarum bv. viciae) protein is Dihydroorotate dehydrogenase (quinone).